Here is a 411-residue protein sequence, read N- to C-terminus: Serine hydroxymethyltransferase (411 aa).

G120–L122 is a (6S)-5,6,7,8-tetrahydrofolate binding site. Position 225 is an N6-(pyridoxal phosphate)lysine (K225). Residues E241 and S350–F352 contribute to the (6S)-5,6,7,8-tetrahydrofolate site.

This sequence belongs to the SHMT family. In terms of assembly, homodimer. Requires pyridoxal 5'-phosphate as cofactor.

The protein resides in the cytoplasm. The enzyme catalyses (6R)-5,10-methylene-5,6,7,8-tetrahydrofolate + glycine + H2O = (6S)-5,6,7,8-tetrahydrofolate + L-serine. It participates in one-carbon metabolism; tetrahydrofolate interconversion. It functions in the pathway amino-acid biosynthesis; glycine biosynthesis; glycine from L-serine: step 1/1. In terms of biological role, catalyzes the reversible interconversion of serine and glycine with tetrahydrofolate (THF) serving as the one-carbon carrier. This reaction serves as the major source of one-carbon groups required for the biosynthesis of purines, thymidylate, methionine, and other important biomolecules. Also exhibits THF-independent aldolase activity toward beta-hydroxyamino acids, producing glycine and aldehydes, via a retro-aldol mechanism. The polypeptide is Serine hydroxymethyltransferase (Limosilactobacillus fermentum (strain NBRC 3956 / LMG 18251) (Lactobacillus fermentum)).